We begin with the raw amino-acid sequence, 193 residues long: Chromophore lyase CpcS/CpeS 4 (193 aa).

This sequence belongs to the CpcS/CpeS biliprotein lyase family.

Functionally, covalently attaches a chromophore to Cys residue(s) of phycobiliproteins. This chain is Chromophore lyase CpcS/CpeS 4, found in Trichodesmium erythraeum (strain IMS101).